A 127-amino-acid polypeptide reads, in one-letter code: Cytochrome c2 (127 aa).

The signal sequence occupies residues 1-20 (MRKLVFGLFVLAASVAPAAA). Gln-21 carries the post-translational modification Pyrrolidone carboxylic acid. Heme c-binding residues include Cys-33, Cys-36, His-37, and Met-99.

The protein belongs to the cytochrome c family. In terms of processing, binds 1 heme c group covalently per subunit.

Its function is as follows. Cytochrome c2 is found mainly in purple, non-sulfur, photosynthetic bacteria where it functions as the electron donor to the oxidized bacteriochlorophyll in the photophosphorylation pathway. However, it may also have a role in the respiratory chain and is found in some non-photosynthetic bacteria. This Blastochloris viridis (Rhodopseudomonas viridis) protein is Cytochrome c2 (cycA).